The primary structure comprises 304 residues: Probable actin-related protein 2/3 complex subunit 2 (304 aa).

This sequence belongs to the ARPC2 family. As to quaternary structure, component of the Arp2/3 complex.

Its subcellular location is the cytoplasm. The protein resides in the cytoskeleton. Functionally, functions as actin-binding component of the Arp2/3 complex which is involved in regulation of actin polymerization and together with an activating nucleation-promoting factor (NPF) mediates the formation of branched actin networks. Seems to contact the mother actin filament. The chain is Probable actin-related protein 2/3 complex subunit 2 (Arc-p34) from Anopheles gambiae (African malaria mosquito).